A 463-amino-acid polypeptide reads, in one-letter code: Mitochondrial distribution and morphology protein 10 (463 aa).

The protein belongs to the MDM10 family. Component of the ER-mitochondria encounter structure (ERMES) or MDM complex, composed of MMM1, MDM10, MDM12 and MDM34. Associates with the mitochondrial outer membrane sorting assembly machinery SAM(core) complex.

It is found in the mitochondrion outer membrane. In terms of biological role, component of the ERMES/MDM complex, which serves as a molecular tether to connect the endoplasmic reticulum and mitochondria. Components of this complex are involved in the control of mitochondrial shape and protein biogenesis and may function in phospholipid exchange. MDM10 is involved in the late assembly steps of the general translocase of the mitochondrial outer membrane (TOM complex). Functions in the TOM40-specific route of the assembly of outer membrane beta-barrel proteins, including the association of TOM40 with the receptor TOM22 and small TOM proteins. Can associate with the SAM(core) complex as well as the MDM12-MMM1 complex, both involved in late steps of the major beta-barrel assembly pathway, that is responsible for biogenesis of all outer membrane beta-barrel proteins. May act as a switch that shuttles between both complexes and channels precursor proteins into the TOM40-specific pathway. Plays a role in mitochondrial morphology and in the inheritance of mitochondria. The chain is Mitochondrial distribution and morphology protein 10 from Candida dubliniensis (strain CD36 / ATCC MYA-646 / CBS 7987 / NCPF 3949 / NRRL Y-17841) (Yeast).